Reading from the N-terminus, the 35-residue chain is Photosystem II reaction center protein Psb30 (35 aa).

The helical transmembrane segment at 7 to 27 (LIANFGALALITLAGPAVIFI) threads the bilayer.

It belongs to the Psb30/Ycf12 family. As to quaternary structure, PSII is composed of 1 copy each of membrane proteins PsbA, PsbB, PsbC, PsbD, PsbE, PsbF, PsbH, PsbI, PsbJ, PsbK, PsbL, PsbM, PsbT, PsbX, PsbY, PsbZ, Psb30/Ycf12, peripheral proteins PsbO, CyanoQ (PsbQ), PsbU, PsbV and a large number of cofactors. It forms dimeric complexes.

It localises to the cellular thylakoid membrane. A core subunit of photosystem II (PSII), probably helps stabilize the reaction center. In Synechococcus sp. (strain CC9311), this protein is Photosystem II reaction center protein Psb30.